We begin with the raw amino-acid sequence, 599 residues long: Dual specificity tyrosine-phosphorylation-regulated kinase 2 (599 aa).

Residues 1-55 (MLTRKPSAAAPAAYPTGRGGDTAVRQLQASPGIGAGAPRSGVGTGPPSPIALPPL) form a disordered region. A Phosphoserine modification is found at Ser30. A Phosphothreonine; by ATM modification is found at Thr104. Positions 187–189 (KKR) match the Nuclear localization signal motif. In terms of domain architecture, Protein kinase spans 220 to 533 (YEVLKVIGKG…PGQALRHPWL (314 aa)). ATP is bound by residues 226-234 (IGKGSFGQV), Lys249, and 299-302 (FELL). Asp346 functions as the Proton acceptor in the catalytic mechanism. Thr379 carries the phosphothreonine; by MAP3K10 modification. Position 380 is a phosphotyrosine; by autocatalysis (Tyr380). Ser440 bears the Phosphoserine; by ATM mark. The residue at position 447 (Ser447) is a Phosphoserine; by MAP3K10.

It belongs to the protein kinase superfamily. CMGC Ser/Thr protein kinase family. MNB/DYRK subfamily. As to quaternary structure, component of an E3 ligase complex containing DYRK2, EDD/UBR5, DDB1 and DCAF1 (EDVP complex). Interacts directly with EDD/UBR5, DDB1 and DCAF1. Interacts with SIAH2 and MDM2. Interacts with MAP3K10 and NFATC1. May also interact with CCNL2. Requires Mg(2+) as cofactor. It depends on Mn(2+) as a cofactor. Autophosphorylates cotranslationally on the second tyrosine residue in the Tyr-X-Tyr motif in the activation loop, but once mature, does not have any protein tyrosine kinase activity. Phosphorylated at Thr-104 and Ser-440 by ATM in response to genotoxic stress. Post-translationally, under normal conditions, polyubiquitinated in the nucleus by MDM2, leading to its proteasomal degradation. Phosphorylation on Thr-104 and Ser-440 by ATM in response to genotoxic stress disrupts MDM2 binding and prevents MDM2-mediated ubiquitination and subsequent proteasomal degradation. Polyubiquitinated by SIAH2, leading to its proteasomal degradation. Polyubiquitinated by SIAH2 occurs under normal conditions, and is enhanced in response to hypoxia.

The protein localises to the cytoplasm. It is found in the nucleus. The catalysed reaction is L-seryl-[protein] + ATP = O-phospho-L-seryl-[protein] + ADP + H(+). The enzyme catalyses L-threonyl-[protein] + ATP = O-phospho-L-threonyl-[protein] + ADP + H(+). It carries out the reaction L-tyrosyl-[protein] + ATP = O-phospho-L-tyrosyl-[protein] + ADP + H(+). With respect to regulation, activated by autophosphorylation on the second tyrosine residue in the Tyr-X-Tyr motif in the activation loop. In terms of biological role, serine/threonine-protein kinase involved in the regulation of the mitotic cell cycle, cell proliferation, apoptosis, organization of the cytoskeleton and neurite outgrowth. Functions in part via its role in ubiquitin-dependent proteasomal protein degradation. Functions downstream of ATM and phosphorylates p53/TP53 at 'Ser-46', and thereby contributes to the induction of apoptosis in response to DNA damage. Phosphorylates NFATC1, and thereby inhibits its accumulation in the nucleus and its transcription factor activity. Phosphorylates EIF2B5 at 'Ser-544', enabling its subsequent phosphorylation and inhibition by GSK3B. Likewise, phosphorylation of NFATC1, CRMP2/DPYSL2 and CRMP4/DPYSL3 promotes their subsequent phosphorylation by GSK3B. May play a general role in the priming of GSK3 substrates. Inactivates GYS1 by phosphorylation at 'Ser-641', and potentially also a second phosphorylation site, thus regulating glycogen synthesis. Mediates EDVP E3 ligase complex formation and is required for the phosphorylation and subsequent degradation of KATNA1. Phosphorylates TERT at 'Ser-457', promoting TERT ubiquitination by the EDVP complex. Phosphorylates SIAH2, and thereby increases its ubiquitin ligase activity. Promotes the proteasomal degradation of MYC and JUN, and thereby regulates progress through the mitotic cell cycle and cell proliferation. Promotes proteasomal degradation of GLI2 and GLI3, and thereby plays a role in smoothened and sonic hedgehog signaling. Phosphorylates CRMP2/DPYSL2, CRMP4/DPYSL3, DCX, EIF2B5, EIF4EBP1, GLI2, GLI3, GYS1, JUN, MDM2, MYC, NFATC1, p53/TP53, TAU/MAPT and KATNA1. Can phosphorylate histone H1, histone H3 and histone H2B (in vitro). Can phosphorylate CARHSP1 (in vitro). Plays a role in cytoskeleton organization and neurite outgrowth via its phosphorylation of DCX. The chain is Dual specificity tyrosine-phosphorylation-regulated kinase 2 from Mus musculus (Mouse).